A 307-amino-acid chain; its full sequence is Alpha N-terminal protein methyltransferase 1 (307 aa).

Positions 38 to 54 (EPAPAPAAGSNGVAGEQ) are enriched in low complexity. The segment at 38–60 (EPAPAPAAGSNGVAGEQEAGGGG) is disordered. S-adenosyl-L-methionine-binding positions include Gly-123, Arg-128, 145-147 (EPV), 179-180 (LQ), and Gln-195.

The protein belongs to the methyltransferase superfamily. NTM1 family.

It catalyses the reaction N-terminal L-alanyl-L-prolyl-L-lysyl-[protein] + 3 S-adenosyl-L-methionine = N-terminal N,N,N-trimethyl-L-alanyl-L-prolyl-L-lysyl-[protein] + 3 S-adenosyl-L-homocysteine + 3 H(+). The catalysed reaction is N-terminal L-seryl-L-prolyl-L-lysyl-[protein] + 3 S-adenosyl-L-methionine = N-terminal N,N,N-trimethyl-L-seryl-L-prolyl-L-lysyl-[protein] + 3 S-adenosyl-L-homocysteine + 3 H(+). It carries out the reaction N-terminal L-prolyl-L-prolyl-L-lysyl-[protein] + 2 S-adenosyl-L-methionine = N-terminal N,N-dimethyl-L-prolyl-L-prolyl-L-lysyl-[protein] + 2 S-adenosyl-L-homocysteine + 2 H(+). Functionally, alpha-N-methyltransferase that methylates the N-terminus of target proteins containing the N-terminal motif [Ala/Pro/Ser]-Pro-Lys when the initiator Met is cleaved. Specifically catalyzes mono-, di- or tri-methylation of exposed alpha-amino group of Ala or Ser residue in the [Ala/Ser]-Pro-Lys motif and mono- or di-methylation of Pro in the Pro-Pro-Lys motif. In Oryza sativa subsp. indica (Rice), this protein is Alpha N-terminal protein methyltransferase 1.